Consider the following 422-residue polypeptide: Serine hydroxymethyltransferase (422 aa).

Residues Leu-118 and 122-124 (GHL) each bind (6S)-5,6,7,8-tetrahydrofolate. Lys-227 bears the N6-(pyridoxal phosphate)lysine mark. (6S)-5,6,7,8-tetrahydrofolate contacts are provided by residues Glu-243 and 351–353 (SPF).

This sequence belongs to the SHMT family. In terms of assembly, homodimer. Requires pyridoxal 5'-phosphate as cofactor.

Its subcellular location is the cytoplasm. The enzyme catalyses (6R)-5,10-methylene-5,6,7,8-tetrahydrofolate + glycine + H2O = (6S)-5,6,7,8-tetrahydrofolate + L-serine. It participates in one-carbon metabolism; tetrahydrofolate interconversion. It functions in the pathway amino-acid biosynthesis; glycine biosynthesis; glycine from L-serine: step 1/1. In terms of biological role, catalyzes the reversible interconversion of serine and glycine with tetrahydrofolate (THF) serving as the one-carbon carrier. This reaction serves as the major source of one-carbon groups required for the biosynthesis of purines, thymidylate, methionine, and other important biomolecules. Also exhibits THF-independent aldolase activity toward beta-hydroxyamino acids, producing glycine and aldehydes, via a retro-aldol mechanism. This Kosmotoga olearia (strain ATCC BAA-1733 / DSM 21960 / TBF 19.5.1) protein is Serine hydroxymethyltransferase.